The primary structure comprises 251 residues: uncharacterized protein (251 aa).

The protein localises to the mitochondrion. This is an uncharacterized protein from Arabidopsis thaliana (Mouse-ear cress).